The chain runs to 592 residues: Potassium-transporting ATPase potassium-binding subunit (592 aa).

13 consecutive transmembrane segments (helical) span residues 6–26 (WLET…FGTY), 67–87 (ACAM…MLLL), 136–156 (GFAV…IAAI), 179–199 (LYIL…QGVI), 283–303 (LSNI…TYTF), 312–332 (QGWA…GVFY), 359–379 (FGLA…CGAV), 389–409 (IGGM…GGVG), 411–431 (GLYT…LMIG), 450–470 (ITTV…AMIL), 489–511 (LYAF…GNTL), 519–539 (VAML…AGGL), and 559–579 (FALW…FPAL).

This sequence belongs to the KdpA family. The system is composed of three essential subunits: KdpA, KdpB and KdpC.

It is found in the cell inner membrane. Its function is as follows. Part of the high-affinity ATP-driven potassium transport (or Kdp) system, which catalyzes the hydrolysis of ATP coupled with the electrogenic transport of potassium into the cytoplasm. This subunit binds the periplasmic potassium ions and delivers the ions to the membrane domain of KdpB through an intramembrane tunnel. This chain is Potassium-transporting ATPase potassium-binding subunit, found in Geotalea uraniireducens (strain Rf4) (Geobacter uraniireducens).